Here is a 233-residue protein sequence, read N- to C-terminus: Cilia- and flagella-associated protein 299 (233 aa).

As to expression, abundantly expressed in testis, specifically in spermatogonia and primary spermatocytes but not in secondary spermatocytes and spermatids.

It localises to the cytoplasm. The protein resides in the nucleus. Functionally, may be involved in spermatogenesis. The protein is Cilia- and flagella-associated protein 299 of Mus musculus (Mouse).